Here is a 338-residue protein sequence, read N- to C-terminus: Glyceraldehyde-3-phosphate dehydrogenase, cytosolic (338 aa).

The tract at residues 2–153 (ADKKIKIGIN…YKSDLNIVSN (152 aa)) is binding to NAD. Residues 15-16 (RI) and Asp37 contribute to the NAD(+) site. The segment at 56-75 (GQWKHNELKVKDEKTLLFGE) is external loop. An NAD(+)-binding site is contributed by Arg84. The segment at 154–338 (ASCTTNCLAP…VDLIIHMSKA (185 aa)) is catalytic. 155–157 (SCT) contacts D-glyceraldehyde 3-phosphate. Cys156 (nucleophile) is an active-site residue. 2 positions are modified to S-nitrosocysteine: Cys156 and Cys160. The segment at 183 to 206 (HSITATQKTVDGPSMKDWRGGRAA) is S-loop. D-glyceraldehyde 3-phosphate is bound by residues Thr186, 215–216 (TG), and Arg238. Asn320 is a binding site for NAD(+).

Belongs to the glyceraldehyde-3-phosphate dehydrogenase family. Homotetramer.

It is found in the cytoplasm. It catalyses the reaction D-glyceraldehyde 3-phosphate + phosphate + NAD(+) = (2R)-3-phospho-glyceroyl phosphate + NADH + H(+). It functions in the pathway carbohydrate degradation; glycolysis; pyruvate from D-glyceraldehyde 3-phosphate: step 1/5. In terms of biological role, key enzyme in glycolysis that catalyzes the first step of the pathway by converting D-glyceraldehyde 3-phosphate (G3P) into 3-phospho-D-glyceroyl phosphate. Essential for the maintenance of cellular ATP levels and carbohydrate metabolism. The chain is Glyceraldehyde-3-phosphate dehydrogenase, cytosolic (GAPC) from Sinapis alba (White mustard).